The primary structure comprises 503 residues: AMP phosphorylase (503 aa).

AMP is bound by residues G168, 194 to 199, and T203; that span reads SRAITS. The active-site Proton donor is the D256. Positions 264 and 288 each coordinate AMP.

Belongs to the thymidine/pyrimidine-nucleoside phosphorylase family. Type 2 subfamily.

The catalysed reaction is AMP + phosphate = alpha-D-ribose 1,5-bisphosphate + adenine. The enzyme catalyses CMP + phosphate = cytosine + alpha-D-ribose 1,5-bisphosphate. It carries out the reaction UMP + phosphate = alpha-D-ribose 1,5-bisphosphate + uracil. Its function is as follows. Catalyzes the conversion of AMP and phosphate to adenine and ribose 1,5-bisphosphate (R15P). Exhibits phosphorylase activity toward CMP and UMP in addition to AMP. Functions in an archaeal AMP degradation pathway, together with R15P isomerase and RubisCO. In Pyrococcus horikoshii (strain ATCC 700860 / DSM 12428 / JCM 9974 / NBRC 100139 / OT-3), this protein is AMP phosphorylase.